Reading from the N-terminus, the 70-residue chain is ATP synthase subunit c (70 aa).

The next 2 helical transmembrane spans lie at 1–21 and 47–67; these read MNFLAAAIAAGLAAFAASYGN and FIGVGLIEAVPILSIVVSFLI.

Belongs to the ATPase C chain family. F-type ATPases have 2 components, F(1) - the catalytic core - and F(0) - the membrane proton channel. F(1) has five subunits: alpha(3), beta(3), gamma(1), delta(1), epsilon(1). F(0) has three main subunits: a(1), b(2) and c(10-14). The alpha and beta chains form an alternating ring which encloses part of the gamma chain. F(1) is attached to F(0) by a central stalk formed by the gamma and epsilon chains, while a peripheral stalk is formed by the delta and b chains.

The protein localises to the cell membrane. Its function is as follows. F(1)F(0) ATP synthase produces ATP from ADP in the presence of a proton or sodium gradient. F-type ATPases consist of two structural domains, F(1) containing the extramembraneous catalytic core and F(0) containing the membrane proton channel, linked together by a central stalk and a peripheral stalk. During catalysis, ATP synthesis in the catalytic domain of F(1) is coupled via a rotary mechanism of the central stalk subunits to proton translocation. In terms of biological role, key component of the F(0) channel; it plays a direct role in translocation across the membrane. A homomeric c-ring of between 10-14 subunits forms the central stalk rotor element with the F(1) delta and epsilon subunits. This Latilactobacillus sakei subsp. sakei (strain 23K) (Lactobacillus sakei subsp. sakei) protein is ATP synthase subunit c.